The chain runs to 468 residues: Homocitrate synthase (468 aa).

The Pyruvate carboxyltransferase domain maps to 11–266; it reads VGILDSTLRE…IEVVDLKKLS (256 aa). Arg-19 contributes to the 2-oxoglutarate binding site. Glu-20 is a Mg(2+) binding site. The 2-oxoglutarate site is built by His-83, Arg-143, and Thr-177. Mg(2+) contacts are provided by His-205 and His-207. His-299 (proton acceptor) is an active-site residue.

It belongs to the alpha-IPM synthase/homocitrate synthase family. Homocitrate synthase LYS20/LYS21 subfamily. Mg(2+) serves as cofactor. Mn(2+) is required as a cofactor.

The catalysed reaction is acetyl-CoA + 2-oxoglutarate + H2O = (2R)-homocitrate + CoA + H(+). It participates in amino-acid biosynthesis; L-lysine biosynthesis via AAA pathway; L-alpha-aminoadipate from 2-oxoglutarate: step 1/5. With respect to regulation, inhibited by lysine. Its function is as follows. Catalyzes the aldol-type condensation of 2-oxoglutarate with acetyl-CoA to yield homocitrate. Carries out the first step of the alpha-aminoadipate (AAA) lysine biosynthesis pathway. Does not display 2-isopropylmalate synthase and citramalate synthase activities since it cannot use 2-oxoisovalerate or pyruvate as substrate. This is Homocitrate synthase from Sulfolobus acidocaldarius (strain ATCC 33909 / DSM 639 / JCM 8929 / NBRC 15157 / NCIMB 11770).